Here is a 43-residue protein sequence, read N- to C-terminus: Protein PsbN (43 aa).

A helical membrane pass occupies residues 5-27 (TLVAISISRLLVSFTGYALYTAF).

The protein belongs to the PsbN family.

The protein resides in the plastid. The protein localises to the chloroplast thylakoid membrane. In terms of biological role, may play a role in photosystem I and II biogenesis. The polypeptide is Protein PsbN (Cycas taitungensis (Prince sago)).